The sequence spans 207 residues: Ribonuclease HII (207 aa).

The RNase H type-2 domain occupies 18–206 (EFIVGVDEVG…VKNILQLLEK (189 aa)). The a divalent metal cation site is built by Asp24, Glu25, and Asp115.

Belongs to the RNase HII family. The cofactor is Mn(2+). Requires Mg(2+) as cofactor.

It localises to the cytoplasm. The enzyme catalyses Endonucleolytic cleavage to 5'-phosphomonoester.. Its function is as follows. Endonuclease that specifically degrades the RNA of RNA-DNA hybrids. This is Ribonuclease HII from Hydrogenovibrio crunogenus (strain DSM 25203 / XCL-2) (Thiomicrospira crunogena).